Consider the following 160-residue polypeptide: Transcription elongation factor GreA (160 aa).

A coiled-coil region spans residues 1-72 (MAEKTYPMTL…QISSLETKIR (72 aa)).

It belongs to the GreA/GreB family.

In terms of biological role, necessary for efficient RNA polymerase transcription elongation past template-encoded arresting sites. The arresting sites in DNA have the property of trapping a certain fraction of elongating RNA polymerases that pass through, resulting in locked ternary complexes. Cleavage of the nascent transcript by cleavage factors such as GreA or GreB allows the resumption of elongation from the new 3'terminus. GreA releases sequences of 2 to 3 nucleotides. This is Transcription elongation factor GreA from Streptococcus sanguinis (strain SK36).